The following is a 324-amino-acid chain: Putative glycosyltransferase R655 (324 aa).

Belongs to the glycosyltransferase 25 family.

The chain is Putative glycosyltransferase R655 from Acanthamoeba polyphaga (Amoeba).